The chain runs to 390 residues: EF-hand calcium-binding domain-containing protein 4A (390 aa).

Residues 1-27 (MSPRSTLRSPLPSRTARSSASSDTPSP) show a composition bias toward low complexity. The segment at 1-37 (MSPRSTLRSPLPSRTARSSASSDTPSPGADRQDRMSK) is disordered. EF-hand domains follow at residues 33–66 (DRMSKAKELFVLCDKEGKGFITKRDMQRLQQELP) and 67–102 (LSPEQLESVFESLDRDRNGYLTPLEFHTGLGELVGS). The Ca(2+) site is built by Asp-80, Asp-82, Asn-84, Tyr-86, and Glu-91. A coiled-coil region spans residues 173 to 357 (SHLQDALKEK…DDKDAHQAQK (185 aa)). Residues 206–234 (DMESQLKEERERRQALDSMRQGDKKEQLL) are disordered.

Belongs to the EFCAB4 family.

This chain is EF-hand calcium-binding domain-containing protein 4A (cracr2b), found in Danio rerio (Zebrafish).